The chain runs to 735 residues: Type-3 glutamine synthetase (735 aa).

A GS beta-grasp domain is found at 89-183; it reads THYCHWFLPL…IPTAFCSWTG (95 aa). The region spanning 188–621 is the GS catalytic domain; it reads QKTPLLRSME…SLYDLVSTLV (434 aa).

This sequence belongs to the glutamine synthetase family. Type 3 subfamily. In terms of assembly, homohexamer.

The catalysed reaction is L-glutamate + NH4(+) + ATP = L-glutamine + ADP + phosphate + H(+). This is Type-3 glutamine synthetase (glnA3) from Dictyostelium discoideum (Social amoeba).